A 204-amino-acid chain; its full sequence is Urease accessory protein UreG 1 (204 aa).

14–21 (GPVGSGKT) contributes to the GTP binding site.

The protein belongs to the SIMIBI class G3E GTPase family. UreG subfamily. In terms of assembly, homodimer. UreD, UreF and UreG form a complex that acts as a GTP-hydrolysis-dependent molecular chaperone, activating the urease apoprotein by helping to assemble the nickel containing metallocenter of UreC. The UreE protein probably delivers the nickel.

The protein localises to the cytoplasm. Facilitates the functional incorporation of the urease nickel metallocenter. This process requires GTP hydrolysis, probably effectuated by UreG. In Methylorubrum populi (strain ATCC BAA-705 / NCIMB 13946 / BJ001) (Methylobacterium populi), this protein is Urease accessory protein UreG 1.